Reading from the N-terminus, the 620-residue chain is Apoptosis regulator MC163R (620 aa).

A helical transmembrane segment spans residues 113 to 133; that stretch reads APLPLLLLPLLLPPMILLFFL.

The protein resides in the host mitochondrion. The protein localises to the host membrane. Functionally, plays a role in the inhibition of host apoptosis. Prevents host TNF-alpha-induced mitochondrial membrane permeabilization and reduces caspase-3/CASP3 and PARP1 cleavage induced by the intrinsic apoptotic pathway. The polypeptide is Apoptosis regulator MC163R (MC163R) (Homo sapiens (Human)).